The chain runs to 190 residues: Remorin (190 aa).

Positions 1-12 (MAEEQKTSKVDV) are enriched in basic and acidic residues. 2 disordered regions span residues 1–45 (MAEE…VESK) and 50–69 (VEKPIEEHTPKKASSGSADR). Serine 14 bears the Phosphoserine mark. Residue threonine 58 is modified to Phosphothreonine. Positions 92 to 147 (EKSKAENRAQKKISDVHAWENSKKAAVEAQLRKIEEKLEKKKAQYGEKMKNKVAAI) form a coiled coil.

Belongs to the remorin family. In terms of assembly, may polymerize to form filamentous structures. Expressed in roots, leaves, stems, flowers and siliques, with a maximal expression in apical regions.

In terms of biological role, exhibits a non sequence-specific DNA-binding activity. The sequence is that of Remorin (DBP) from Arabidopsis thaliana (Mouse-ear cress).